The chain runs to 313 residues: Olfactory receptor 1J4 (313 aa).

Residues M1–A25 lie on the Extracellular side of the membrane. A glycan (N-linked (GlcNAc...) asparagine) is linked at N5. Residues V26 to I49 traverse the membrane as a helical segment. Over R50–T57 the chain is Cytoplasmic. A helical membrane pass occupies residues P58–P79. Topologically, residues K80–Q100 are extracellular. The cysteines at positions 97 and 189 are disulfide-linked. A helical membrane pass occupies residues M101 to Y120. The Cytoplasmic segment spans residues D121–G139. The helical transmembrane segment at L140–S158 threads the bilayer. Over H159–N195 the chain is Extracellular. The helical transmembrane segment at E196–G219 threads the bilayer. The Cytoplasmic segment spans residues H220 to K236. Residues A237–Y259 traverse the membrane as a helical segment. At F260–V272 the chain is on the extracellular side. The chain crosses the membrane as a helical span at residues I273–L292. Topologically, residues R293 to Q313 are cytoplasmic.

Belongs to the G-protein coupled receptor 1 family.

It is found in the cell membrane. Functionally, odorant receptor. This chain is Olfactory receptor 1J4 (OR1J4), found in Homo sapiens (Human).